A 44-amino-acid polypeptide reads, in one-letter code: Photosystem I reaction center subunit IX (44 aa).

A helical membrane pass occupies residues 7 to 27; that stretch reads YLSVAPVASTLWFVALAGLLI.

Belongs to the PsaJ family.

The protein resides in the plastid. The protein localises to the chloroplast thylakoid membrane. Functionally, may help in the organization of the PsaE and PsaF subunits. The chain is Photosystem I reaction center subunit IX from Cicer arietinum (Chickpea).